The following is a 246-amino-acid chain: Probable site-specific recombinase in afa region (246 aa).

A Tyr recombinase domain is found at 40–225 (ATPAYLLAPE…FALDMAATLA (186 aa)). Catalysis depends on residues Arg75, Lys102, His177, Arg180, and His203. The active-site O-(3'-phospho-DNA)-tyrosine intermediate is the Tyr212.

Belongs to the 'phage' integrase family.

The sequence is that of Probable site-specific recombinase in afa region (int) from Escherichia coli.